The primary structure comprises 297 residues: GTPase Era (297 aa).

Residues 7–174 (HSGFVSIIGR…VQVVRDLLPE (168 aa)) form the Era-type G domain. Residues 15–22 (GRPNVGKS) are G1. 15–22 (GRPNVGKS) provides a ligand contact to GTP. Residues 41–45 (QTTRN) are G2. The segment at 62–65 (DTPG) is G3. GTP-binding positions include 62–66 (DTPGI) and 124–127 (NKVD). The interval 124–127 (NKVD) is G4. Residues 153–155 (VSA) are G5. One can recognise a KH type-2 domain in the interval 205 to 282 (THDEVPYSVA…FLELFVRVSR (78 aa)).

It belongs to the TRAFAC class TrmE-Era-EngA-EngB-Septin-like GTPase superfamily. Era GTPase family. As to quaternary structure, monomer.

The protein localises to the cytoplasm. The protein resides in the cell inner membrane. Its function is as follows. An essential GTPase that binds both GDP and GTP, with rapid nucleotide exchange. Plays a role in 16S rRNA processing and 30S ribosomal subunit biogenesis and possibly also in cell cycle regulation and energy metabolism. The protein is GTPase Era of Geotalea daltonii (strain DSM 22248 / JCM 15807 / FRC-32) (Geobacter daltonii).